Reading from the N-terminus, the 315-residue chain is Acetyl-coenzyme A carboxylase carboxyl transferase subunit alpha (315 aa).

The 254-residue stretch at 40 to 293 (LQDKSKTLTE…RAELSSQLAM (254 aa)) folds into the CoA carboxyltransferase C-terminal domain.

This sequence belongs to the AccA family. In terms of assembly, acetyl-CoA carboxylase is a heterohexamer composed of biotin carboxyl carrier protein (AccB), biotin carboxylase (AccC) and two subunits each of ACCase subunit alpha (AccA) and ACCase subunit beta (AccD).

The protein localises to the cytoplasm. The enzyme catalyses N(6)-carboxybiotinyl-L-lysyl-[protein] + acetyl-CoA = N(6)-biotinyl-L-lysyl-[protein] + malonyl-CoA. It participates in lipid metabolism; malonyl-CoA biosynthesis; malonyl-CoA from acetyl-CoA: step 1/1. Its function is as follows. Component of the acetyl coenzyme A carboxylase (ACC) complex. First, biotin carboxylase catalyzes the carboxylation of biotin on its carrier protein (BCCP) and then the CO(2) group is transferred by the carboxyltransferase to acetyl-CoA to form malonyl-CoA. This chain is Acetyl-coenzyme A carboxylase carboxyl transferase subunit alpha, found in Pseudomonas fluorescens (strain Pf0-1).